The sequence spans 433 residues: 3-phosphoshikimate 1-carboxyvinyltransferase (433 aa).

Residues lysine 21, serine 22, and arginine 26 each contribute to the 3-phosphoshikimate site. Residue lysine 21 coordinates phosphoenolpyruvate. Glycine 92 and arginine 120 together coordinate phosphoenolpyruvate. 4 residues coordinate 3-phosphoshikimate: serine 166, glutamine 168, aspartate 317, and lysine 344. A phosphoenolpyruvate-binding site is contributed by glutamine 168. The active-site Proton acceptor is aspartate 317. Phosphoenolpyruvate contacts are provided by arginine 348 and arginine 391.

The protein belongs to the EPSP synthase family. Monomer.

It localises to the cytoplasm. It catalyses the reaction 3-phosphoshikimate + phosphoenolpyruvate = 5-O-(1-carboxyvinyl)-3-phosphoshikimate + phosphate. It functions in the pathway metabolic intermediate biosynthesis; chorismate biosynthesis; chorismate from D-erythrose 4-phosphate and phosphoenolpyruvate: step 6/7. Catalyzes the transfer of the enolpyruvyl moiety of phosphoenolpyruvate (PEP) to the 5-hydroxyl of shikimate-3-phosphate (S3P) to produce enolpyruvyl shikimate-3-phosphate and inorganic phosphate. The sequence is that of 3-phosphoshikimate 1-carboxyvinyltransferase from Caldicellulosiruptor saccharolyticus (strain ATCC 43494 / DSM 8903 / Tp8T 6331).